The following is a 371-amino-acid chain: tRNA-specific 2-thiouridylase MnmA (371 aa).

ATP contacts are provided by residues 16 to 23 (GMSGGVDS) and methionine 42. The interaction with target base in tRNA stretch occupies residues 102–104 (NPD). The active-site Nucleophile is the cysteine 107. A disulfide bond links cysteine 107 and cysteine 204. Glycine 132 is a binding site for ATP. The interval 154–156 (KDQ) is interaction with tRNA. Cysteine 204 functions as the Cysteine persulfide intermediate in the catalytic mechanism. The segment at 316 to 317 (RY) is interaction with tRNA.

The protein belongs to the MnmA/TRMU family.

It is found in the cytoplasm. The catalysed reaction is S-sulfanyl-L-cysteinyl-[protein] + uridine(34) in tRNA + AH2 + ATP = 2-thiouridine(34) in tRNA + L-cysteinyl-[protein] + A + AMP + diphosphate + H(+). Catalyzes the 2-thiolation of uridine at the wobble position (U34) of tRNA, leading to the formation of s(2)U34. This Shewanella halifaxensis (strain HAW-EB4) protein is tRNA-specific 2-thiouridylase MnmA.